Consider the following 1347-residue polypeptide: MAEPRRVAFISLSPVRRREAEYPGPEREPEYPREPPRLEPQPYREPARAEPPAPREPAPRSDAQPPSREKPLPQREVSRAEPPMSLQREPPRPEPPPPFPPLPLQPPPPRESASRAEQPPRPPRETVRLELVLKDPTDESCVEFSYPELLLCGEQRKKLIHTEDPFNDEHQERQEVEMLAKKFEMKYGGKPRKHRKDRLQDLIDIGFGYDETDPFIDNSEAYDELVPASLTTKYGGFYINTGTLQFRQASDTEEDDITDNQKHKPPKVPKIKEDDIEMKKRKRKEEGEKEKKPRKKVPKQLGVVALNSHKSEKKKKRYKDSLSLAAMIRKFQKEKDALKKESNPKVPVTLSTPSLNKPPCAAAALGNDVPDLNLSSGDPDLPIFVSTNEHELFQEAENALEMLDDFDFDRLLDAASDGSPLSESGGENGTTTQPTYTSQVMPKVVPTLPEGLPVLLEKRIEDLRVAAKLFDEEGRKKFFTQDMNNILLDIELQLQELGPVIRSGVYSHLEAFVPCNKETLVKRLKKLHLNVQDDRLREPLQKLKLAVSNVMPEQLFKYQEDCQARSQAKCAKLQTDEEREKNGSEEDDDEKPGKRVIGPRKKFHWDDTIRTLLCNLVEIKLGCYELEPNKSQSAEDYLKSFMETEVKPLWPKGWMQARMLFKESRSVHNHLTSAPAKKKVIPAPKPKVKEVMVKTLPLHSFPTMLKECSPKKDQKTPTSLVASVSGPPTSSSTAAIAAASSSSAPAQETICLDDSLDEDLSFHSPSLDLVSEALAVINNGNKGPPVGSRISMPTTKPRPGLREEKLASIMSKLPLATPKKLDSTQTTHSSSLIAGHTGPVPKKPQDLAHTGISSGLIAGSSIQNPKVSLEPLPARLLQQGLQRSSQIHTSSSSQTHVSSSSQAQIAASSHALGTSEAQDASSLTQVTKVHQHSAVQQNYVSPLQATISKSQTNPVVKLSNNPQLSCSSSLIKTSDKPLMYRLPLSTPSPGNGSQGSHPLVSRTVPSTTTSSNYLAKAMVSQISTQGFKSPFSMAASPKLAASPKPATSPKPLPSPKPSASPKPSLSAKPSVSTKLISKSNPTPKPTVSPSSSSPNALVAQGSHSSTNSPVHKQPSGMNISRQSPTLNLLPSSRTSGLPPTKNLQAPSKLTNSSSTGTVGKNSLSGIAMNVPASRGSNLNSSGANRTSLSGGTGSGTQGATKPLSTPHRPSTASGSSVVTASVQSTAGASLLANASPLTLMTSPLSVTNQNVTPFGMLGGLVPVTMPFQFPLEIFGFGTDTAGVTTTSGSTSAAFHHSLTQNLLKGLQPGGAQHAATLSHSPLPAHLQQAFHDGGQSKGDTKLPRKSQ.

Residues 1-134 (MAEPRRVAFI…ETVRLELVLK (134 aa)) are disordered. A Phosphoserine modification is found at S13. Basic and acidic residues-rich tracts occupy residues 16–37 (RRREAEYPGPEREPEYPREPPR) and 67–79 (SREKPLPQREVSR). Over residues 93–110 (PEPPPPFPPLPLQPPPPR) the composition is skewed to pro residues. The span at 122-134 (PPRETVRLELVLK) shows a compositional bias: basic and acidic residues. A Phosphothreonine modification is found at T243. The residue at position 250 (S250) is a Phosphoserine. The segment at 250–301 (SDTEEDDITDNQKHKPPKVPKIKEDDIEMKKRKRKEEGEKEKKPRKKVPKQL) is disordered. T252 is modified (phosphothreonine). A Glycyl lysine isopeptide (Lys-Gly) (interchain with G-Cter in SUMO2) cross-link involves residue K272. Residues S311, S416, S419, S422, and S584 each carry the phosphoserine modification. Disordered regions lie at residues 573 to 597 (LQTDEEREKNGSEEDDDEKPGKRVI), 707 to 740 (ECSPKKDQKTPTSLVASVSGPPTSSSTAAIAAAS), 815 to 849 (LATPKKLDSTQTTHSSSLIAGHTGPVPKKPQDLAH), 880 to 913 (GLQRSSQIHTSSSSQTHVSSSSQAQIAASSHALG), 981 to 1006 (RLPLSTPSPGNGSQGSHPLVSRTVPS), and 1035 to 1218 (ASPK…SSVV). Residues 574-584 (QTDEEREKNGS) show a composition bias toward basic and acidic residues. The segment covering 721–740 (VASVSGPPTSSSTAAIAAAS) has biased composition (low complexity). Positions 823 to 832 (STQTTHSSSL) are enriched in polar residues. The segment covering 880–911 (GLQRSSQIHTSSSSQTHVSSSSQAQIAASSHA) has biased composition (low complexity). Over residues 985–996 (STPSPGNGSQGS) the composition is skewed to polar residues. Low complexity predominate over residues 1035–1045 (ASPKLAASPKP). A compositionally biased stretch (pro residues) spans 1046-1060 (ATSPKPLPSPKPSAS). 2 stretches are compositionally biased toward low complexity: residues 1061-1070 (PKPSLSAKPS) and 1077-1095 (SKSNPTPKPTVSPSSSSPN). An N6-acetyllysine modification is found at K1068. 2 stretches are compositionally biased toward polar residues: residues 1101–1164 (GSHS…NSLS) and 1174–1185 (RGSNLNSSGANR). Position 1123 is a phosphoserine (S1123). At K1148 the chain carries N6-acetyllysine.

The protein belongs to the ubinuclein family. Expressed in several cell lines tested, including primary and transformed cell lines.

In Homo sapiens (Human), this protein is Ubinuclein-2 (UBN2).